We begin with the raw amino-acid sequence, 554 residues long: L-ascorbate oxidase homolog (554 aa).

The N-terminal stretch at 1 to 21 (MGSGKVTFVALLLCLSVGVIA) is a signal peptide. 2 consecutive Plastocyanin-like domains span residues 22-143 (EDPY…LNVH) and 196-296 (SAKV…AIIR). Residues N31, N59, and N108 are each glycosylated (N-linked (GlcNAc...) asparagine). A disulfide bridge links C101 with C540. N-linked (GlcNAc...) asparagine glycosylation is found at N332, N352, and N423. A Plastocyanin-like 3 domain is found at 411–521 (DPSKLTIATN…LGEQLYFSVL (111 aa)).

Belongs to the multicopper oxidase family. As to expression, pollen.

It is found in the secreted. It localises to the extracellular space. Probable oxidoreductase that may be involved in pollen tube growth. The chain is L-ascorbate oxidase homolog from Nicotiana tabacum (Common tobacco).